The sequence spans 95 residues: uncharacterized protein (95 aa).

Residues 60-89 are a coiled coil; the sequence is VKNMINRIVEELDKRIDEIKEGLNELEKSG.

This is an uncharacterized protein from Sulfolobus islandicus filamentous virus (isolate Iceland/Hveragerdi) (SIFV).